The sequence spans 327 residues: tRNA uridine(34) hydroxylase (327 aa).

The Rhodanese domain maps to 123 to 217 (SDPEVLVVDT…YLEEVPQEQS (95 aa)). Residue C177 is the Cysteine persulfide intermediate of the active site.

Belongs to the TrhO family.

It carries out the reaction uridine(34) in tRNA + AH2 + O2 = 5-hydroxyuridine(34) in tRNA + A + H2O. Functionally, catalyzes oxygen-dependent 5-hydroxyuridine (ho5U) modification at position 34 in tRNAs. In Vibrio cholerae serotype O1 (strain ATCC 39315 / El Tor Inaba N16961), this protein is tRNA uridine(34) hydroxylase.